The following is a 129-amino-acid chain: Large ribosomal subunit protein bL12c (129 aa).

The protein belongs to the bacterial ribosomal protein bL12 family. Homodimer. Part of the ribosomal stalk of the 50S ribosomal subunit. Forms a multimeric L10(L12)X complex, where L10 forms an elongated spine to which 2 to 4 L12 dimers bind in a sequential fashion. Binds GTP-bound translation factors.

Its subcellular location is the plastid. The protein resides in the chloroplast. Forms part of the ribosomal stalk which helps the ribosome interact with GTP-bound translation factors. Is thus essential for accurate translation. The sequence is that of Large ribosomal subunit protein bL12c from Oltmannsiellopsis viridis (Marine flagellate).